The following is a 297-amino-acid chain: Probable endonuclease 4 (297 aa).

The Zn(2+) site is built by His69, His110, Glu145, Asp179, His182, His214, Asp227, His229, and Glu259.

Belongs to the AP endonuclease 2 family. Requires Zn(2+) as cofactor.

It catalyses the reaction Endonucleolytic cleavage to 5'-phosphooligonucleotide end-products.. Endonuclease IV plays a role in DNA repair. It cleaves phosphodiester bonds at apurinic or apyrimidinic (AP) sites, generating a 3'-hydroxyl group and a 5'-terminal sugar phosphate. This Listeria monocytogenes serotype 4b (strain CLIP80459) protein is Probable endonuclease 4.